Consider the following 703-residue polypeptide: Harmonin-binding protein USHBP1 (703 aa).

A compositionally biased stretch (basic residues) spans 1–15 (MSARATRPRSRRGRH). Disordered regions lie at residues 1–113 (MSAR…PPGN) and 138–172 (HQPP…CQRE). Residues 189-227 (SREDELVRTQASLEAIRAEKETLQKEVQELQDSLLRLEP) adopt a coiled-coil conformation. The disordered stretch occupies residues 228-256 (CPHLSHNQAGGSGSGSSSSEADREPWETQ). Residues 289–309 (EMHIMEAQMEQLRGSIEKLKC) adopt a coiled-coil conformation. Residues 396–416 (MDAGAQQNPQPSPEGSSVDKP) are disordered. A compositionally biased stretch (polar residues) spans 400–410 (AQQNPQPSPEG). A coiled-coil region spans residues 476 to 513 (RLEKTQIQQDLVAAREALADLMLRLQLVRREKRGLELR). Residues 540-583 (AGGANSSGGHSSGGGSSGDEEEWYQGLPAVPGGTSGIDGGQVGR) form a disordered region. A compositionally biased stretch (gly residues) spans 572–581 (GTSGIDGGQV). Residues 596-681 (ASLTRTLDLQ…QAEEVAVLEA (86 aa)) adopt a coiled-coil conformation.

This sequence belongs to the MCC family. As to quaternary structure, interacts via its C-terminus with the first PDZ domain of USH1C. In terms of tissue distribution, highest level of expression in heart, and moderate to low expression in skeletal muscle, kidney, liver, small intestine, placenta and lung.

This chain is Harmonin-binding protein USHBP1, found in Homo sapiens (Human).